Here is a 302-residue protein sequence, read N- to C-terminus: MQADLYPSRQEDQPSWQERLDPVVYRSDLENAPIAAELVERFERDGYLVIPNLFSADEVALFRAELERMRQDPAVAGSGKTIKEPDSGAIRSVFAIHKDNELFARVAADERTAGIARFILGGDLYVHQSRMNFKPGFTGKEFYWHSDFETWHIEDGMPRMRCLSCSILLTDNEPHNGPLMLMPGSHKHYVRCVGATPENHYEKSLRKQEIGIPDQNSLSELASRFGIDCATGPAGSVVFFDCNTMHGSNGNITPSARSNLFYVYNHVDNAVQAPFCEQKPRPAFVAERENFKPLDIRPQQYL.

Position 128 (Gln128) interacts with L-ectoine. Lys134 is a 2-oxoglutarate binding site. Positions 145, 147, and 246 each coordinate Fe cation.

Belongs to the PhyH family. EctD subfamily. Homodimer. Fe(2+) is required as a cofactor.

It catalyses the reaction L-ectoine + 2-oxoglutarate + O2 = 5-hydroxyectoine + succinate + CO2. Functionally, involved in the biosynthesis of 5-hydroxyectoine, called compatible solute, which helps organisms to survive extreme osmotic stress by acting as a highly soluble organic osmolyte. Catalyzes the 2-oxoglutarate-dependent selective hydroxylation of L-ectoine to yield (4S,5S)-5-hydroxyectoine. The sequence is that of Ectoine dioxygenase from Stutzerimonas stutzeri (strain A1501) (Pseudomonas stutzeri).